A 105-amino-acid chain; its full sequence is Large ribosomal subunit protein bL21 (105 aa).

This sequence belongs to the bacterial ribosomal protein bL21 family. As to quaternary structure, part of the 50S ribosomal subunit. Contacts protein L20.

Functionally, this protein binds to 23S rRNA in the presence of protein L20. The chain is Large ribosomal subunit protein bL21 from Rickettsia canadensis (strain McKiel).